We begin with the raw amino-acid sequence, 62 residues long: Amolopin-P2 (62 aa).

Residues 1-22 (MFTLKKSLLLLFFLGTISLSLC) form the signal peptide. Positions 23-44 (EQERGADEEENGGEVTEQEVKR) are excised as a propeptide.

The protein belongs to the frog skin active peptide (FSAP) family. Amolopin subfamily. In terms of tissue distribution, expressed by the skin glands.

Its subcellular location is the secreted. In terms of biological role, antimicrobial peptide with activity against Gram-positive bacteria. Has been tested against S.aureus (MIC=37.5 ug/mL), against B.pumilus (MIC=75.0 ug/mL), B.cereus (no activity detected). Does not show activity against Gram-negative bacteria (E.coli, B.dysenteriae, A.calcoaceticus, P.aeruginosa) and fungi (C.albicans). Does not show hemolytic activity against rabbit erythrocytes. This Amolops loloensis (Lolokou Sucker Frog) protein is Amolopin-P2.